The chain runs to 199 residues: Adenylyl-sulfate kinase (199 aa).

Residue 34–41 (GLSGSGKS) participates in ATP binding. S108 acts as the Phosphoserine intermediate in catalysis.

It belongs to the APS kinase family.

The enzyme catalyses adenosine 5'-phosphosulfate + ATP = 3'-phosphoadenylyl sulfate + ADP + H(+). It functions in the pathway sulfur metabolism; hydrogen sulfide biosynthesis; sulfite from sulfate: step 2/3. In terms of biological role, catalyzes the synthesis of activated sulfate. This is Adenylyl-sulfate kinase from Oceanobacillus iheyensis (strain DSM 14371 / CIP 107618 / JCM 11309 / KCTC 3954 / HTE831).